We begin with the raw amino-acid sequence, 286 residues long: Homeobox-leucine zipper protein ATHB-20 (286 aa).

Positions L84–Q143 form a DNA-binding region, homeobox. The tract at residues L144–L179 is leucine-zipper.

This sequence belongs to the HD-ZIP homeobox family. Class I subfamily. Widely expressed.

Its subcellular location is the nucleus. In terms of biological role, probable transcription factor. This chain is Homeobox-leucine zipper protein ATHB-20 (ATHB-20), found in Arabidopsis thaliana (Mouse-ear cress).